A 426-amino-acid polypeptide reads, in one-letter code: Na(+)/H(+) antiporter 1 (426 aa).

12 helical membrane passes run 1-21 (MELM…SLVA), 29-49 (IPDI…LQII), 57-77 (IFEY…AFTM), 95-115 (ITFL…LNLP), 120-140 (VGYL…IPVF), 158-178 (IFND…FGLF), 184-204 (LIDL…LAKI), 208-228 (IIIH…GAML), 236-256 (LLPS…IMGL), 286-306 (VFIF…NYFI), 309-329 (LLVA…LGLI), and 382-402 (IAGT…ILEA).

Belongs to the monovalent cation:proton antiporter 1 (CPA1) transporter (TC 2.A.36) family.

It is found in the cell membrane. This is a Na(+)/H(+) antiporter. Can also transport lithium. This Methanocaldococcus jannaschii (strain ATCC 43067 / DSM 2661 / JAL-1 / JCM 10045 / NBRC 100440) (Methanococcus jannaschii) protein is Na(+)/H(+) antiporter 1.